Consider the following 246-residue polypeptide: MSIDWFTFTAQVINFLVLVGLLRYFLYAPIVRAMQAREQKVTQCLTDAETAKVEANQQRMSLEKQTQLLQERREELLTKAKADADNERQRLIAEARKEADTRREHWTSTFERDQKDLADQTRRDIQRMGFQAARETVQQLADEDLQKRVCQTFVKQLQTLGEDQLAAIATQLADSGNPVLVRSAKGLDSSDQNQIRDAIHRVFENKVEVRFESEPALIAGIEMDAGGYSLPWNAERTLKTMEANVA.

Residues 5–27 (WFTFTAQVINFLVLVGLLRYFLY) form a helical membrane-spanning segment.

This sequence belongs to the ATPase B chain family. As to quaternary structure, F-type ATPases have 2 components, F(1) - the catalytic core - and F(0) - the membrane proton channel. F(1) has five subunits: alpha(3), beta(3), gamma(1), delta(1), epsilon(1). F(0) has three main subunits: a(1), b(2) and c(10-14). The alpha and beta chains form an alternating ring which encloses part of the gamma chain. F(1) is attached to F(0) by a central stalk formed by the gamma and epsilon chains, while a peripheral stalk is formed by the delta and b chains.

The protein resides in the cell inner membrane. Functionally, f(1)F(0) ATP synthase produces ATP from ADP in the presence of a proton or sodium gradient. F-type ATPases consist of two structural domains, F(1) containing the extramembraneous catalytic core and F(0) containing the membrane proton channel, linked together by a central stalk and a peripheral stalk. During catalysis, ATP synthesis in the catalytic domain of F(1) is coupled via a rotary mechanism of the central stalk subunits to proton translocation. In terms of biological role, component of the F(0) channel, it forms part of the peripheral stalk, linking F(1) to F(0). This chain is ATP synthase subunit b 1, found in Rhodopirellula baltica (strain DSM 10527 / NCIMB 13988 / SH1).